We begin with the raw amino-acid sequence, 1166 residues long: ATP-dependent helicase/deoxyribonuclease subunit B (1166 aa).

The UvrD-like helicase ATP-binding domain occupies 1–278; the sequence is MGAEFLVGRS…LNLDITYKEL (278 aa). Residues Ser10, Gly11, Lys14, Thr15, Lys16, Thr236, and Arg283 each coordinate ATP. Residues 281–586 form the UvrD-like helicase C-terminal domain; the sequence is TERHTKTPEL…TFSLIPPALD (306 aa). The [4Fe-4S] cluster site is built by Cys801, Cys1121, Cys1124, and Cys1130.

The protein belongs to the helicase family. AddB/RexB type 1 subfamily. In terms of assembly, heterodimer of AddA and AddB. The cofactor is At low magnesium concentrations there is no nuclease activity, but helicase activity is unaffected.. Mg(2+) is required as a cofactor. [4Fe-4S] cluster serves as cofactor.

Its function is as follows. The heterodimer acts both as a highly processive, ATP-dependent DNA helicase and as an ATP-dependent single-stranded exonuclease, acting in both directions. Recognizes the B.subtilis Chi site (5'-AGCGG-3') which transforms the enzyme from a helicase which degrades both DNA strands to one with only 5' to 3' exonuclease activity. This generates a double-stranded DNA with a protruding 3'-terminated single-stranded tail suitable for the initiation of homologous recombination (Chi fragment). The AddB nuclease domain is not required for Chi fragment generation but for recognition of the Chi site; this subunit has 5' -&gt; 3' nuclease activity but no helicase activity. The helicase activity of isolated AddA acts on 3'-tailed substrate and requires AddB to bind to blunt-ended DNA. RecA thread formation during DNA double-strand break repair requires RecJ or AddAB. This is ATP-dependent helicase/deoxyribonuclease subunit B from Bacillus subtilis (strain 168).